Here is a 205-residue protein sequence, read N- to C-terminus: Protein GrpE (205 aa).

It belongs to the GrpE family. In terms of assembly, homodimer.

The protein resides in the cytoplasm. Its function is as follows. Participates actively in the response to hyperosmotic and heat shock by preventing the aggregation of stress-denatured proteins, in association with DnaK and GrpE. It is the nucleotide exchange factor for DnaK and may function as a thermosensor. Unfolded proteins bind initially to DnaJ; upon interaction with the DnaJ-bound protein, DnaK hydrolyzes its bound ATP, resulting in the formation of a stable complex. GrpE releases ADP from DnaK; ATP binding to DnaK triggers the release of the substrate protein, thus completing the reaction cycle. Several rounds of ATP-dependent interactions between DnaJ, DnaK and GrpE are required for fully efficient folding. The chain is Protein GrpE from Shewanella loihica (strain ATCC BAA-1088 / PV-4).